Consider the following 29-residue polypeptide: Brevinin-2Td (29 aa).

A disulfide bridge links Cys23 with Cys29.

The protein belongs to the frog skin active peptide (FSAP) family. Brevinin subfamily. As to expression, expressed by the skin glands.

Its subcellular location is the secreted. Functionally, antibacterial activity against representative Gram-negative and Gram-positive bacteria. This Rana temporaria (European common frog) protein is Brevinin-2Td.